The chain runs to 222 residues: Ribonuclease 3 (222 aa).

Positions 3-125 constitute an RNase III domain; that stretch reads SQSVAKKLNH…LFGAIYLDAG (123 aa). Glutamate 38 is a binding site for Mg(2+). Aspartate 42 is a catalytic residue. Residues aspartate 111 and glutamate 114 each coordinate Mg(2+). Residue glutamate 114 is part of the active site. Residues 152 to 222 enclose the DRBM domain; that stretch reads DAKTRLQEWL…AEKALKELLA (71 aa).

The protein belongs to the ribonuclease III family. As to quaternary structure, homodimer. Requires Mg(2+) as cofactor.

The protein localises to the cytoplasm. It carries out the reaction Endonucleolytic cleavage to 5'-phosphomonoester.. Functionally, digests double-stranded RNA. Involved in the processing of primary rRNA transcript to yield the immediate precursors to the large and small rRNAs (23S and 16S). Processes some mRNAs, and tRNAs when they are encoded in the rRNA operon. Processes pre-crRNA and tracrRNA of type II CRISPR loci if present in the organism. The polypeptide is Ribonuclease 3 (Dechloromonas aromatica (strain RCB)).